The chain runs to 136 residues: Type II nicking enzyme V.XorIIP (136 aa).

This sequence belongs to the Vsr family.

Its function is as follows. May nick XorII sequences that contain T/G mispairs resulting from m5C-deamination. If unrepaired, these mismatches can lead to C-to-T transition mutations. The very short patch (VSP) repair process counteracts the mutagenic process by repairing the mismatches in favor of the G-containing strand. This enzyme is an endonuclease that nicks double-stranded DNA within the sequence CGATCG (C-methylation site unknown) next to the thymidine residue that is mismatched to 2'-deoxyguanosine. The incision is mismatch-dependent and strand-specific. The protein is Type II nicking enzyme V.XorIIP of Xanthomonas oryzae pv. oryzae (strain KACC10331 / KXO85).